Reading from the N-terminus, the 546-residue chain is G1/S-specific cyclin CLN1 (546 aa).

The disordered stretch occupies residues 224–265 (SNGKEWSCKRKSQSSDDSDATVEEHISSSPQSTGLDGDTTTM).

Belongs to the cyclin family.

Essential for the control of the cell cycle at the G1/S (start) transition. Interacts with the CDC28 protein kinase to form MPF. The chain is G1/S-specific cyclin CLN1 (CLN1) from Saccharomyces cerevisiae (strain ATCC 204508 / S288c) (Baker's yeast).